An 85-amino-acid chain; its full sequence is Splicing factor 3B subunit 5 (85 aa).

Belongs to the SF3B5 family. As to quaternary structure, component of the SF3B complex. SF3B complex associates with the splicing factor SF3A complex and a 12S RNA unit to form the U2 small nuclear ribonucleoproteins complex (U2 snRNP). Identified in the SAGA transcription regulatory histone acetylation (HAT) complex; the interaction is RNA-independent.

It localises to the nucleus. Involved in pre-mRNA splicing as component of spliceosome. As part of the spliceosome complex, plays a role in the regulation of spermatogonial differentiation. When associated with the SAGA transcription regulatory histone acetylation (HAT) complex, might be involved in the transcriptional activation of a subset of SAGA-regulated genes. The polypeptide is Splicing factor 3B subunit 5 (Drosophila melanogaster (Fruit fly)).